Here is a 230-residue protein sequence, read N- to C-terminus: RING finger protein 141 (230 aa).

Gly-2 carries the N-myristoyl glycine lipid modification. The RING-type zinc-finger motif lies at 155-192 (CCICMDGRADLILPCAHSFCQKCIDKWSDRHRNCPICR).

The protein localises to the membrane. Functionally, may be involved in spermatogenesis. The polypeptide is RING finger protein 141 (RNF141) (Pongo abelii (Sumatran orangutan)).